A 509-amino-acid chain; its full sequence is Histidine--tRNA ligase, cytoplasmic (509 aa).

Position 2 is an N-acetylalanine (A2). Positions 3–59 constitute a WHEP-TRS domain; that stretch reads ERAALEELVKLQGERVRGLKQQKASAELIEEEVAKLLKLKAQLGPDESKQKFVLKTP. S66 bears the Phosphoserine mark. L-histidine is bound by residues 130-132, R157, Q173, D177, R326, and 330-331; these read DLT and YY. The residue at position 356 (S356) is a Phosphoserine.

The protein belongs to the class-II aminoacyl-tRNA synthetase family. As to quaternary structure, homodimer. Brain, heart, liver and kidney.

It is found in the cytoplasm. It carries out the reaction tRNA(His) + L-histidine + ATP = L-histidyl-tRNA(His) + AMP + diphosphate + H(+). Catalyzes the ATP-dependent ligation of histidine to the 3'-end of its cognate tRNA, via the formation of an aminoacyl-adenylate intermediate (His-AMP). Plays a role in axon guidance. The sequence is that of Histidine--tRNA ligase, cytoplasmic from Homo sapiens (Human).